A 333-amino-acid chain; its full sequence is Ribosomal RNA small subunit methyltransferase C (333 aa).

It belongs to the methyltransferase superfamily. RsmC family. Monomer.

It is found in the cytoplasm. It catalyses the reaction guanosine(1207) in 16S rRNA + S-adenosyl-L-methionine = N(2)-methylguanosine(1207) in 16S rRNA + S-adenosyl-L-homocysteine + H(+). In terms of biological role, specifically methylates the guanine in position 1207 of 16S rRNA in the 30S particle. The protein is Ribosomal RNA small subunit methyltransferase C of Chromohalobacter salexigens (strain ATCC BAA-138 / DSM 3043 / CIP 106854 / NCIMB 13768 / 1H11).